The sequence spans 82 residues: Large ribosomal subunit protein bL27 (82 aa).

Positions 1-20 (MATKKAGGSSSNGRDSIGKR) are disordered.

It belongs to the bacterial ribosomal protein bL27 family.

This is Large ribosomal subunit protein bL27 from Neorickettsia sennetsu (strain ATCC VR-367 / Miyayama) (Ehrlichia sennetsu).